The chain runs to 365 residues: GDSL lipase (365 aa).

The N-terminal stretch at M1–S27 is a signal peptide. S40 (nucleophile) is an active-site residue. N189 and N310 each carry an N-linked (GlcNAc...) asparagine glycan. Active-site charge relay system residues include D318 and H321.

Belongs to the 'GDSL' lipolytic enzyme family. In terms of tissue distribution, restricted to the pericarp during achene maturation. Expressed in the leaves of mature plants and seedlings, as well as in buds and flowers. Present in disk florets.

It is found in the secreted. The protein resides in the extracellular space. It carries out the reaction (Z,S)-pyrethrolone + (1R,3R)-chrysanthemoyl-CoA = pyrethrin I + CoA. The enzyme catalyses (Z,S)-pyrethrolone + (1R,3R)-pyrethroyl-CoA = pyrethrin II + CoA. It catalyses the reaction (Z,S)-jasmololone + (1R,3R)-chrysanthemoyl-CoA = jasmolin I + CoA. The catalysed reaction is (Z,S)-cinerolone + (1R,3R)-chrysanthemoyl-CoA = cinerin I + CoA. It carries out the reaction (Z,S)-jasmololone + (1R,3R)-pyrethroyl-CoA = jasmolin II + CoA. The enzyme catalyses (Z,S)-cinerolone + (1R,3R)-pyrethroyl-CoA = cinerin II + CoA. It participates in isoprenoid biosynthesis. Component of the monoterpenoid pyrethrins biosynthesis; pyrethrins are widely used plant-derived pesticide. Acyltransferase that catalyzes the esterification of terpene acids and lipid alcohol substrates into pyrethrins; mediates the transfer of a chrysanthemoyl moiety from the coenzyme A (CoA) thio-ester chrysanthemoyl CoA to pyrethrolone, and, to a lower extent, to jasmololone and cinerolone thus producing pyrethrins (e.g. pyrethrin type I). Can also use pyrethroyl CoA as substrate. Also has esterase activity, being able to cleave the ester bond of pyrethrin I, p-nitrophenyl butanoate and p-nitrophenyl octanoate to produce pyrethrolone and p-nitrophenol, respectively. The polypeptide is GDSL lipase (Tanacetum cinerariifolium (Dalmatian daisy)).